Consider the following 572-residue polypeptide: Galectin-3-binding protein B (572 aa).

An N-terminal signal peptide occupies residues 1–14 (MLLLWPLLFLQVSA). The SRCR domain maps to 32-131 (VRLVGVIPSS…HKEDAGVICA (100 aa)). 3 disulfide bridges follow: Cys56/Cys120, Cys69/Cys130, and Cys100/Cys110. N-linked (GlcNAc...) asparagine glycans are attached at residues Asn135, Asn195, and Asn202. Residues 164–231 (CDFTIAVRDL…LYTRQIDVST (68 aa)) enclose the BTB domain. Residues 270–372 (QVSMYEYGVR…IPVDKLYDIQ (103 aa)) form the BACK domain. Asn430 and Asn548 each carry an N-linked (GlcNAc...) asparagine glycan.

It is found in the secreted. The protein localises to the extracellular space. It localises to the extracellular matrix. Its function is as follows. Promotes integrin-mediated cell adhesion. This is Galectin-3-binding protein B (lgals3bpb) from Danio rerio (Zebrafish).